The sequence spans 68 residues: uncharacterized protein (68 aa).

This is an uncharacterized protein from Haemophilus influenzae (strain ATCC 51907 / DSM 11121 / KW20 / Rd).